The following is a 668-amino-acid chain: DNA ligase (668 aa).

Residues 34 to 38 (DAEYD), 83 to 84 (SL), and Glu113 each bind NAD(+). The active-site N6-AMP-lysine intermediate is the Lys115. Positions 136, 170, 286, and 310 each coordinate NAD(+). Zn(2+) is bound by residues Cys404, Cys407, Cys422, and Cys427. A BRCT domain is found at 590–668 (DSDSYFAGKT…EEQLMGELKK (79 aa)).

The protein belongs to the NAD-dependent DNA ligase family. LigA subfamily. Mg(2+) serves as cofactor. Mn(2+) is required as a cofactor.

It carries out the reaction NAD(+) + (deoxyribonucleotide)n-3'-hydroxyl + 5'-phospho-(deoxyribonucleotide)m = (deoxyribonucleotide)n+m + AMP + beta-nicotinamide D-nucleotide.. DNA ligase that catalyzes the formation of phosphodiester linkages between 5'-phosphoryl and 3'-hydroxyl groups in double-stranded DNA using NAD as a coenzyme and as the energy source for the reaction. It is essential for DNA replication and repair of damaged DNA. The protein is DNA ligase of Bacillus subtilis (strain 168).